We begin with the raw amino-acid sequence, 482 residues long: Magnesium-dependent glutamate N-prenyltransferase (482 aa).

4 residues coordinate Mg(2+): Asn351, Thr355, Glu359, and Phe366.

This sequence belongs to the terpene synthase family. Mg(2+) is required as a cofactor.

It carries out the reaction (2E)-geranyl diphosphate + L-glutamate = N-geranyl-L-glutamate + diphosphate. It functions in the pathway secondary metabolite biosynthesis. Its function is as follows. Magnesium-dependent glutamate N-prenyltransferase: part of the gene cluster that mediates the biosynthesis of domoic acid (DA) and derivatives, natural products with neurochemical activity acting as ionotropic glutamate receptor (iGluR) agonists, thus being neurotoxins causing amnesic shellfish poisoning (ASP). Catalyzes the conversion of L-glutamic acid (L-Glu) to N-geranyl-L-glutamic acid (NGG) in the presence of geranyl diphosphate (GPP). Also able to catalyze the formation of farnesyl-L-glutamate from farnesyl diphosphate (FPP). Cannot use dimethylallyl diphosphate (DMAPP) as substrate. This chain is Magnesium-dependent glutamate N-prenyltransferase, found in Pseudo-nitzschia multiseries (Marine planktonic diatom).